The chain runs to 336 residues: MTTDDTRPIAVLGAGSYGTALAIALARNGQRTHLWGHNPDKMVKMAEQRMNTESLPAIPFPNALIIEKVLAHTLQQAQDILIVVPSHAFADILHQIKPLLTTQHRIMWATKGLEHNTGRLLQTVATEIIGEQHPFAVLSGPTFAKELALGLPTAITLASHDAKFADEMQQRIHCSKAFRVYLNTDMIGVQLGGAIKNVIAIGAGISDGMGFGANARTALITRGLAEISRLGESLGANPKTFMGMAGLGDLVLTCTDNQSRNRRFGLALGQGKSAEQAIAEIGQVVEGFYNTKETYLLAQRQNIEMPIVEQIYQMLFCNKNANDVVTSLLERQRKKE.

NADPH-binding residues include S16, Y17, H37, and K111. K111, G140, and T142 together coordinate sn-glycerol 3-phosphate. A144 lines the NADPH pocket. 5 residues coordinate sn-glycerol 3-phosphate: K196, D249, S259, R260, and N261. The active-site Proton acceptor is the K196. R260 provides a ligand contact to NADPH. V284 and E286 together coordinate NADPH.

This sequence belongs to the NAD-dependent glycerol-3-phosphate dehydrogenase family.

The protein resides in the cytoplasm. The enzyme catalyses sn-glycerol 3-phosphate + NAD(+) = dihydroxyacetone phosphate + NADH + H(+). It catalyses the reaction sn-glycerol 3-phosphate + NADP(+) = dihydroxyacetone phosphate + NADPH + H(+). It participates in membrane lipid metabolism; glycerophospholipid metabolism. Functionally, catalyzes the reduction of the glycolytic intermediate dihydroxyacetone phosphate (DHAP) to sn-glycerol 3-phosphate (G3P), the key precursor for phospholipid synthesis. The protein is Glycerol-3-phosphate dehydrogenase [NAD(P)+] of Haemophilus ducreyi (strain 35000HP / ATCC 700724).